We begin with the raw amino-acid sequence, 345 residues long: GTP cyclohydrolase-2 (345 aa).

The segment at 1 to 27 is disordered; it reads MTIDNYDNSKQDSSKYEVSGTGDGRNG. Residue 143–147 participates in GTP binding; the sequence is RIHSE. Zn(2+) is bound by residues C148, C159, and C161. Residues Q164, 197–199, and T219 each bind GTP; that span reads EGR. Residue D231 is the Proton acceptor of the active site. R233 serves as the catalytic Nucleophile. The GTP site is built by T254 and K259. A disordered region spans residues 312-345; sequence PLKLHTNPQPTETSEAQNQNRMNSALSSTSTLAI. Positions 317–345 are enriched in polar residues; that stretch reads TNPQPTETSEAQNQNRMNSALSSTSTLAI.

It belongs to the GTP cyclohydrolase II family. Requires Zn(2+) as cofactor.

The catalysed reaction is GTP + 4 H2O = 2,5-diamino-6-hydroxy-4-(5-phosphoribosylamino)-pyrimidine + formate + 2 phosphate + 3 H(+). Its pathway is cofactor biosynthesis; riboflavin biosynthesis; 5-amino-6-(D-ribitylamino)uracil from GTP: step 1/4. In terms of biological role, catalyzes the conversion of GTP to 2,5-diamino-6-ribosylamino-4(3H)-pyrimidinone 5'-phosphate (DARP), formate and pyrophosphate. This Saccharomyces cerevisiae (strain ATCC 204508 / S288c) (Baker's yeast) protein is GTP cyclohydrolase-2 (RIB1).